Here is a 1938-residue protein sequence, read N- to C-terminus: Myosin-1 (1938 aa).

The segment at 1-27 is disordered; sequence MSLEHEKDPGWQYLKRSREQQLADQSR. Positions 16-27 are enriched in basic and acidic residues; the sequence is RSREQQLADQSR. A Myosin N-terminal SH3-like domain is found at 30–80; the sequence is DSKKNVWIPDAEEGYIEGVIKGPGPKADTVIVTAGGKDVTLKKDIVQEVNP. In terms of domain architecture, Myosin motor spans 84–785; sequence EKTEDMSNLT…VVAHIEDLRD (702 aa). Residue lysine 128 is modified to N6,N6,N6-trimethyllysine. 177 to 184 provides a ligand contact to ATP; the sequence is GESGAGKT. 2 actin-binding regions span residues 660-682 and 764-778; these read LNKLMTMLHKTHPHFIRCIIPNE and RIGHTKVFFKAGVVA. The segment at 846 to 1170 is alpha-helical tailpiece (short S2); the sequence is QLKCGKMAEE…NKQLEIQQDN (325 aa). A rodlike tail (S2 and LMM domains) region spans residues 846 to 1938; that stretch reads QLKCGKMAEE…GQVVRSATNK (1093 aa). Residues 846–1938 adopt a coiled-coil conformation; that stretch reads QLKCGKMAEE…GQVVRSATNK (1093 aa). Positions 919 to 951 are disordered; the sequence is RQEVEKSLNDANDRLSEHEEKNADLEKQRRKAQ. The segment covering 920–951 has biased composition (basic and acidic residues); sequence QEVEKSLNDANDRLSEHEEKNADLEKQRRKAQ. Positions 1171–1938 are light meromyosin (LMM); sequence NKKKDSEIIK…GQVVRSATNK (768 aa).

The protein belongs to the TRAFAC class myosin-kinesin ATPase superfamily. Myosin family. Muscle myosin is a hexameric protein that consists of 2 heavy chain subunits (MHC), 2 alkali light chain subunits (MLC) and 2 regulatory light chain subunits (MLC-2). Interacts with itr-1 (via c-terminal coiled coil domain). In terms of tissue distribution, found exclusively in the pharyngeal muscle.

The protein resides in the cytoplasm. Its subcellular location is the myofibril. In terms of biological role, muscle contraction. This is Myosin-1 from Caenorhabditis elegans.